Reading from the N-terminus, the 369-residue chain is Cobalt-precorrin-5B C(1)-methyltransferase (369 aa).

It belongs to the CbiD family.

It carries out the reaction Co-precorrin-5B + S-adenosyl-L-methionine = Co-precorrin-6A + S-adenosyl-L-homocysteine. Its pathway is cofactor biosynthesis; adenosylcobalamin biosynthesis; cob(II)yrinate a,c-diamide from sirohydrochlorin (anaerobic route): step 6/10. In terms of biological role, catalyzes the methylation of C-1 in cobalt-precorrin-5B to form cobalt-precorrin-6A. The protein is Cobalt-precorrin-5B C(1)-methyltransferase of Leptospira borgpetersenii serovar Hardjo-bovis (strain JB197).